A 64-amino-acid chain; its full sequence is uncharacterized protein (64 aa).

It localises to the mitochondrion. This is an uncharacterized protein from Marchantia polymorpha (Common liverwort).